The following is a 294-amino-acid chain: MAHGIPSQGKVTITVDEYSSNPTQAFTHYNINQSRFQPPHVHMVDPIPYDTPKPAGHTRFVCISDTHSRTDGIQMPYGDILLHTGDFTELGLPSEVKKFNDWLGNLPYEYKIVIAGNHELTFDKEFMADLVKQDYYRFPSVSKLKPEDFDNVQSLLTNSIYLQDSEVTVKGFRIYGAPWTPWFNGWGFNLPRGQSLLDKWNLIPEGIDILMTHGPPLGFRDWVPKELQRVGCVELLNTVQRRIRPKLHVFGGIHEGYGIMTDGYTTYINASTCTVSFQPTNPPIIFDLPNPQGS.

The Mn(2+) site is built by Asp65, His67, Asp86, Asn117, and His213. 117 to 118 serves as a coordination point for GMP; that stretch reads NH. Residues 225–226 and 252–255 contribute to the GMP site; these read KE and GIHE. His254 is a binding site for Mn(2+).

This sequence belongs to the UPF0046 family. In terms of assembly, homodimer. It depends on Mn(2+) as a cofactor. Co(2+) serves as cofactor.

Its activity is regulated as follows. Inhibited by nmolar levels of AMP and GMP. In terms of biological role, displays low metallophosphoesterase activity (in vitro). May play a role in the development of the nervous system. The protein is Metallophosphoesterase MPPED2 (Mpped2) of Mus musculus (Mouse).